The chain runs to 216 residues: Vacuolar iron transporter homolog 4 (216 aa).

Positions 1–29 are disordered; sequence MAATNGDAELTVAEEAKEEEEATDDGGGG. Over 1–36 the chain is Cytoplasmic; that stretch reads MAATNGDAELTVAEEAKEEEEATDDGGGGVSSQWLR. The chain crosses the membrane as a helical span at residues 37 to 57; the sequence is AAVLGASDGLVSTAALMLGIG. Over 58-65 the chain is Vacuolar; that stretch reads AARPADAR. Residues 66-86 form a helical membrane-spanning segment; that stretch reads AVLLSGLAGLVAGACSMAIGE. Over 87–134 the chain is Cytoplasmic; it reads YVSVHVQLDVELADLERRRRRGGPAPAGLGLHAAAAAVSRPGQAAAAS. The chain crosses the membrane as a helical span at residues 135–155; sequence ALSFAAGAALPLLAAWFVAGA. Over 156–157 the chain is Vacuolar; that stretch reads YR. A helical membrane pass occupies residues 158–178; it reads VRVVVVVATASLALAAFGAAG. Residues 179–190 lie on the Cytoplasmic side of the membrane; sequence ARLGRAPGGRAG. The chain crosses the membrane as a helical span at residues 191 to 211; it reads LRVVVGGLLAMAATYGVMKLF. The Vacuolar portion of the chain corresponds to 212 to 216; sequence RTHGV.

Belongs to the CCC1 family.

The protein localises to the vacuole membrane. It carries out the reaction Fe(2+)(in) = Fe(2+)(out). Probable vacuolar iron transporter that may be involved in the regulation of iron distribution throughout the plant. This Oryza sativa subsp. japonica (Rice) protein is Vacuolar iron transporter homolog 4.